A 25-amino-acid polypeptide reads, in one-letter code: GLMSSIGKALGGLIVDVLKPKTPAS.

As to expression, expressed by the skin dorsal glands.

It is found in the secreted. Has antimicrobial activity against L.lactis and S.uberis. The protein is Aurein-5.2 of Ranoidea raniformis (Southern bell frog).